Here is a 267-residue protein sequence, read N- to C-terminus: Undecaprenyl-diphosphatase (267 aa).

A run of 8 helical transmembrane segments spans residues methionine 1 to isoleucine 21, glutamine 39 to phenylalanine 59, serine 83 to phenylalanine 103, leucine 111 to valine 131, alanine 149 to isoleucine 169, phenylalanine 189 to methionine 209, leucine 218 to leucine 238, and methionine 246 to leucine 266.

This sequence belongs to the UppP family.

The protein localises to the cell inner membrane. It catalyses the reaction di-trans,octa-cis-undecaprenyl diphosphate + H2O = di-trans,octa-cis-undecaprenyl phosphate + phosphate + H(+). Functionally, catalyzes the dephosphorylation of undecaprenyl diphosphate (UPP). Confers resistance to bacitracin. The polypeptide is Undecaprenyl-diphosphatase (Aliivibrio fischeri (strain ATCC 700601 / ES114) (Vibrio fischeri)).